A 206-amino-acid chain; its full sequence is Small ribosomal subunit protein uS4A (206 aa).

One can recognise an S4 RNA-binding domain in the interval 96 to 156; the sequence is GRLDNVVYRM…EKAKKQSRIG (61 aa).

The protein belongs to the universal ribosomal protein uS4 family. As to quaternary structure, part of the 30S ribosomal subunit. Contacts protein S5. The interaction surface between S4 and S5 is involved in control of translational fidelity.

Its function is as follows. One of the primary rRNA binding proteins, it binds directly to 16S rRNA where it nucleates assembly of the body of the 30S subunit. With S5 and S12 plays an important role in translational accuracy. In Psychromonas ingrahamii (strain DSM 17664 / CCUG 51855 / 37), this protein is Small ribosomal subunit protein uS4A.